The primary structure comprises 864 residues: Protein translocase subunit SecA (864 aa).

ATP contacts are provided by residues Gln85, 103–107 (GEGKT), and Asp542.

The protein belongs to the SecA family. Monomer and homodimer. Part of the essential Sec protein translocation apparatus which comprises SecA, SecYEG and auxiliary proteins SecDF. Other proteins may also be involved.

It localises to the cell inner membrane. The protein localises to the cytoplasm. The catalysed reaction is ATP + H2O + cellular proteinSide 1 = ADP + phosphate + cellular proteinSide 2.. Functionally, part of the Sec protein translocase complex. Interacts with the SecYEG preprotein conducting channel. Has a central role in coupling the hydrolysis of ATP to the transfer of proteins into and across the cell membrane, serving as an ATP-driven molecular motor driving the stepwise translocation of polypeptide chains across the membrane. This Fervidobacterium nodosum (strain ATCC 35602 / DSM 5306 / Rt17-B1) protein is Protein translocase subunit SecA.